Reading from the N-terminus, the 271-residue chain is Putative phosphoenolpyruvate synthase regulatory protein (271 aa).

ADP is bound at residue 151 to 158; that stretch reads GVSRSGKT.

Belongs to the pyruvate, phosphate/water dikinase regulatory protein family. PSRP subfamily.

It carries out the reaction [pyruvate, water dikinase] + ADP = [pyruvate, water dikinase]-phosphate + AMP + H(+). The catalysed reaction is [pyruvate, water dikinase]-phosphate + phosphate + H(+) = [pyruvate, water dikinase] + diphosphate. Bifunctional serine/threonine kinase and phosphorylase involved in the regulation of the phosphoenolpyruvate synthase (PEPS) by catalyzing its phosphorylation/dephosphorylation. This chain is Putative phosphoenolpyruvate synthase regulatory protein, found in Burkholderia mallei (strain NCTC 10247).